The chain runs to 188 residues: uncharacterized protein (188 aa).

The first 23 residues, 1-23 (MVRPKLAFYILPLLLAFLGSALG), serve as a signal peptide directing secretion. N74 carries N-linked (GlcNAc...) asparagine glycosylation.

This is an uncharacterized protein from Mus musculus (Mouse).